The chain runs to 442 residues: Histidinol dehydrogenase (442 aa).

3 residues coordinate NAD(+): Tyr132, Gln194, and Asn217. The substrate site is built by Ser243, Gln265, and His268. Zn(2+)-binding residues include Gln265 and His268. Active-site proton acceptor residues include Glu332 and His333. The substrate site is built by His333, Asp366, Glu420, and His425. A Zn(2+)-binding site is contributed by Asp366. His425 lines the Zn(2+) pocket.

The protein belongs to the histidinol dehydrogenase family. Zn(2+) is required as a cofactor.

The catalysed reaction is L-histidinol + 2 NAD(+) + H2O = L-histidine + 2 NADH + 3 H(+). The protein operates within amino-acid biosynthesis; L-histidine biosynthesis; L-histidine from 5-phospho-alpha-D-ribose 1-diphosphate: step 9/9. Functionally, catalyzes the sequential NAD-dependent oxidations of L-histidinol to L-histidinaldehyde and then to L-histidine. The chain is Histidinol dehydrogenase from Idiomarina loihiensis (strain ATCC BAA-735 / DSM 15497 / L2-TR).